The following is an 883-amino-acid chain: Phosphoenolpyruvate carboxylase (883 aa).

Active-site residues include H138 and K546.

Belongs to the PEPCase type 1 family. It depends on Mg(2+) as a cofactor.

It catalyses the reaction oxaloacetate + phosphate = phosphoenolpyruvate + hydrogencarbonate. Functionally, forms oxaloacetate, a four-carbon dicarboxylic acid source for the tricarboxylic acid cycle. This is Phosphoenolpyruvate carboxylase from Escherichia fergusonii (strain ATCC 35469 / DSM 13698 / CCUG 18766 / IAM 14443 / JCM 21226 / LMG 7866 / NBRC 102419 / NCTC 12128 / CDC 0568-73).